A 196-amino-acid chain; its full sequence is Molybdenum cofactor guanylyltransferase (196 aa).

GTP is bound by residues 10 to 12 (LAG), Lys23, Asn51, Asp69, and Asp99. Mg(2+) is bound at residue Asp99.

The protein belongs to the MobA family. Monomer. Mg(2+) serves as cofactor.

It localises to the cytoplasm. It catalyses the reaction Mo-molybdopterin + GTP + H(+) = Mo-molybdopterin guanine dinucleotide + diphosphate. In terms of biological role, transfers a GMP moiety from GTP to Mo-molybdopterin (Mo-MPT) cofactor (Moco or molybdenum cofactor) to form Mo-molybdopterin guanine dinucleotide (Mo-MGD) cofactor. The chain is Molybdenum cofactor guanylyltransferase from Shewanella baltica (strain OS155 / ATCC BAA-1091).